Reading from the N-terminus, the 364-residue chain is tRNA/tmRNA (uracil-C(5))-methyltransferase (364 aa).

The S-adenosyl-L-methionine site is built by Gln188, Tyr216, Asn221, Glu237, and Asp297. Cys322 (nucleophile) is an active-site residue. Glu356 functions as the Proton acceptor in the catalytic mechanism.

It belongs to the class I-like SAM-binding methyltransferase superfamily. RNA M5U methyltransferase family. TrmA subfamily.

The catalysed reaction is uridine(54) in tRNA + S-adenosyl-L-methionine = 5-methyluridine(54) in tRNA + S-adenosyl-L-homocysteine + H(+). The enzyme catalyses uridine(341) in tmRNA + S-adenosyl-L-methionine = 5-methyluridine(341) in tmRNA + S-adenosyl-L-homocysteine + H(+). Its function is as follows. Dual-specificity methyltransferase that catalyzes the formation of 5-methyluridine at position 54 (m5U54) in all tRNAs, and that of position 341 (m5U341) in tmRNA (transfer-mRNA). The chain is tRNA/tmRNA (uracil-C(5))-methyltransferase from Teredinibacter turnerae (strain ATCC 39867 / T7901).